A 381-amino-acid polypeptide reads, in one-letter code: Cytochrome P450 105C1 (381 aa).

Cys-330 provides a ligand contact to heme.

The protein belongs to the cytochrome P450 family. The cofactor is heme.

The protein localises to the cytoplasm. The protein is Cytochrome P450 105C1 (cyp105C1) of Streptomyces sp.